A 413-amino-acid chain; its full sequence is Oxidoreductase vrtI (413 aa).

The Fe2OG dioxygenase domain maps to 235 to 341 (DAESLTTLSM…RYSIAYFLRA (107 aa)). The Fe cation site is built by His262, Asp264, and His319. Arg332 serves as a coordination point for 2-oxoglutarate.

The protein belongs to the iron/ascorbate-dependent oxidoreductase family.

It participates in secondary metabolite biosynthesis; terpenoid biosynthesis. In terms of biological role, oxidoreductase; part of the gene cluster that mediates the biosynthesis of viridicatumtoxin, a tetracycline-like fungal meroterpenoid with a unique, fused spirobicyclic ring system. The first step of the pathway is the production of the malonamoyl-CoA starter unit for the polyketide synthase vrtA. The aldolase vrtJ may be involved in the synthesis of the malonamate substrate for malonamoyl-CoA synthetase vrtB. The polyketide synthase vrtA then may utilize the malonamoyl-CoA starter unit, followed by sequential condensation of eight malonyl-CoA units to form the polyketide backbone. The cyclization of the last ring could be mediated by the lactamase-like protein vrtG. The proposed post-PKS tailoring steps are a hydroxylation at C5 catalyzed the cytochrome P450 monooxygenase vrtE, a hydroxylation at C12a catalyzed by VrtH and/or VrtI, and an O-methylation by the O-methyltransferase vrtF. VrtC is then proposed to catalyze the transfer of a geranyl group synthesized by vrtD to the aromatic C ring of the tetracyclic polyketide intermediate of viridicatumtoxin to yield previridicatumtoxin. Finally, the cytochrome P450 monooxygenase vrtK catalyzes the spirocyclization of the geranyl moiety of previridicatumtoxin to afford viridicatumtoxin. The polypeptide is Oxidoreductase vrtI (Penicillium aethiopicum).